The following is a 342-amino-acid chain: Tetraacyldisaccharide 4'-kinase (342 aa).

68 to 75 provides a ligand contact to ATP; the sequence is TVGGTGKT.

This sequence belongs to the LpxK family.

The enzyme catalyses a lipid A disaccharide + ATP = a lipid IVA + ADP + H(+). Its pathway is glycolipid biosynthesis; lipid IV(A) biosynthesis; lipid IV(A) from (3R)-3-hydroxytetradecanoyl-[acyl-carrier-protein] and UDP-N-acetyl-alpha-D-glucosamine: step 6/6. In terms of biological role, transfers the gamma-phosphate of ATP to the 4'-position of a tetraacyldisaccharide 1-phosphate intermediate (termed DS-1-P) to form tetraacyldisaccharide 1,4'-bis-phosphate (lipid IVA). In Burkholderia lata (strain ATCC 17760 / DSM 23089 / LMG 22485 / NCIMB 9086 / R18194 / 383), this protein is Tetraacyldisaccharide 4'-kinase.